The primary structure comprises 2475 residues: Non-reducing polyketide synthase ausA (2475 aa).

Residues 14 to 253 are N-terminal acylcarrier protein transacylase domain (SAT); that stretch reads VLFGSKYSEI…HHADHLSAAQ (240 aa). The Ketosynthase family 3 (KS3) domain maps to 384–800; that stretch reads SIPIAVTGLA…GSNAAIVLKE (417 aa). Residues C549, H684, and H723 each act as for beta-ketoacyl synthase activity in the active site. The interval 910–1212 is malonyl-CoA:ACP transacylase (MAT) domain; it reads LCFGGQTGNK…CPMDLSGPQA (303 aa). S997 (for acyl/malonyl transferase activity) is an active-site residue. Positions 1279–1407 are N-terminal hotdog fold; it reads EDLKLVQLLK…GTISLSPGAD (129 aa). A PKS/mFAS DH domain is found at 1279–1586; it reads EDLKLVQLLK…FTSVSIQSLR (308 aa). The product template (PT) domain stretch occupies residues 1282–1585; that stretch reads KLVQLLKNEG…TFTSVSIQSL (304 aa). The active-site Proton acceptor; for dehydratase activity is the H1312. Positions 1435 to 1586 are C-terminal hotdog fold; that stretch reads SSSGLKRSTV…FTSVSIQSLR (152 aa). The Proton donor; for dehydratase activity role is filled by D1493. The Carrier domain occupies 1626-1703; sequence SSNGDDLRTV…ALVQRIFPGR (78 aa). S1663 carries the O-(pantetheine 4'-phosphoryl)serine modification. Positions 1865–2098 are methyltransferase (CMeT) domain; that stretch reads QHTSEHKLLH…GFNWVDWTDN (234 aa). The segment at 2127–2475 is thioesterase (TE) domain; the sequence is SAIHEETVVY…YEFLRSHVGL (349 aa). Catalysis depends on for thioesterase activity residues S2250, D2412, and H2444.

It catalyses the reaction 3 malonyl-CoA + acetyl-CoA + 2 S-adenosyl-L-methionine = 3,5-dimethylorsellinate + 2 S-adenosyl-L-homocysteine + 3 CO2 + 4 CoA. Its pathway is secondary metabolite biosynthesis; terpenoid biosynthesis. Non-reducing polyketide synthase; part of the gene cluster A that mediates the biosynthesis of the fungal meroterpenoid acetoxydehydroaustin. The first step of the pathway is the synthesis of 3,5-dimethylorsellinic acid by the polyketide synthase ausA. 3,5-dimethylorsellinic acid is then prenylated by the polyprenyl transferase ausN. Further epoxidation by the FAD-dependent monooxygenase ausM and cyclization by the probable terpene cyclase ausL lead to the formation of protoaustinoid A. Protoaustinoid A is then oxidized to spiro-lactone preaustinoid A3 by the combined action of the FAD-binding monooxygenases ausB and ausC, and the dioxygenase ausE. Acid-catalyzed keto-rearrangement and ring contraction of the tetraketide portion of preaustinoid A3 by ausJ lead to the formation of preaustinoid A4. The aldo-keto reductase ausK, with the help of ausH, is involved in the next step by transforming preaustinoid A4 into isoaustinone which is in turn hydroxylated by the P450 monooxygenase ausI to form austinolide. The cytochrome P450 monooxygenase ausG then modifies austinolide to austinol. Austinol is further acetylated to austin by the O-acetyltransferase ausP, which spontaneously changes to dehydroaustin. The cytochrome P450 monooxygenase then converts dehydroaustin is into 7-dehydrodehydroaustin. The hydroxylation catalyzed by ausR permits the second O-acetyltransferase ausQ to add an additional acetyl group to the molecule, leading to the formation of acetoxydehydroaustin. Due to genetic rearrangements of the clusters and the subsequent loss of some enzymes, the end product of the Penicillium brasilianum austinoid biosynthesis clusters is acetoxydehydroaustin. This chain is Non-reducing polyketide synthase ausA, found in Penicillium brasilianum.